The chain runs to 349 residues: MDPTNSPQEPPHTSTPGPFDGPQWPHQAPRGMYLSVAVLMGIVVISASVVNGLVIVVSIRYKKLRSPLNYILVNLAMADLLVTLCGSSVSFSNNINGFFVFGKRLCELEGFMVSLTGIVGLWSLAILALERYVVVCRPLGDFRFQHRHAVTGCAFTWVWSLLWTTPPLLGWSSYVPEGLRTSCGPNWYTGGSNNNSYILTLFVTCFVMPLSLILFSYANLLMTLRAAAAQQQESDTTQQAERQVTRMVVAMVMAFLICWLPYTTFALVVATNKDIAIQPALASLPSYFSKTATVYNPIIYVFMNKQFQSCLLKMLCCGHHPRGTGRTAPAAPASPTDGLRNKVTPSHPV.

Positions 1 to 16 are enriched in polar residues; sequence MDPTNSPQEPPHTSTP. Residues 1–22 form a disordered region; the sequence is MDPTNSPQEPPHTSTPGPFDGP. The Extracellular portion of the chain corresponds to 1-32; sequence MDPTNSPQEPPHTSTPGPFDGPQWPHQAPRGM. A helical transmembrane segment spans residues 33–57; that stretch reads YLSVAVLMGIVVISASVVNGLVIVV. Topologically, residues 58 to 69 are cytoplasmic; that stretch reads SIRYKKLRSPLN. Residues 70-94 form a helical membrane-spanning segment; it reads YILVNLAMADLLVTLCGSSVSFSNN. Residues 95-109 are Extracellular-facing; that stretch reads INGFFVFGKRLCELE. A disulfide bridge connects residues Cys106 and Cys183. Residues 110–129 form a helical membrane-spanning segment; sequence GFMVSLTGIVGLWSLAILAL. Over 130–148 the chain is Cytoplasmic; that stretch reads ERYVVVCRPLGDFRFQHRH. Residues 149 to 172 traverse the membrane as a helical segment; sequence AVTGCAFTWVWSLLWTTPPLLGWS. Residues 173-196 lie on the Extracellular side of the membrane; the sequence is SYVPEGLRTSCGPNWYTGGSNNNS. The N-linked (GlcNAc...) asparagine glycan is linked to Asn194. The helical transmembrane segment at 197–224 threads the bilayer; it reads YILTLFVTCFVMPLSLILFSYANLLMTL. At 225–246 the chain is on the cytoplasmic side; it reads RAAAAQQQESDTTQQAERQVTR. A helical membrane pass occupies residues 247 to 270; the sequence is MVVAMVMAFLICWLPYTTFALVVA. The Extracellular segment spans residues 271–278; it reads TNKDIAIQ. The chain crosses the membrane as a helical span at residues 279-303; sequence PALASLPSYFSKTATVYNPIIYVFM. Position 290 is an N6-(retinylidene)lysine (Lys290). Over 304-349 the chain is Cytoplasmic; that stretch reads NKQFQSCLLKMLCCGHHPRGTGRTAPAAPASPTDGLRNKVTPSHPV. S-palmitoyl cysteine attachment occurs at residues Cys316 and Cys317. Residues 325–349 are disordered; that stretch reads GRTAPAAPASPTDGLRNKVTPSHPV.

Belongs to the G-protein coupled receptor 1 family. Opsin subfamily. Post-translationally, phosphorylated on some or all of the serine and threonine residues present in the C-terminal region. In terms of tissue distribution, pineal gland.

It localises to the membrane. Its function is as follows. Produces a slow and prolonged phototransduction response consistent with the non-visual function of pineal photoreception. The protein is Pinopsin of Columba livia (Rock dove).